A 188-amino-acid polypeptide reads, in one-letter code: GMP synthase [glutamine-hydrolyzing] subunit A (188 aa).

Positions 2-188 (KVAVIYFGGQ…FKNFIKICRK (187 aa)) constitute a Glutamine amidotransferase type-1 domain. Cys-79 (nucleophile) is an active-site residue. Active-site residues include His-166 and Glu-168.

Heterodimer composed of a glutamine amidotransferase subunit (A) and a GMP-binding subunit (B).

It carries out the reaction XMP + L-glutamine + ATP + H2O = GMP + L-glutamate + AMP + diphosphate + 2 H(+). It participates in purine metabolism; GMP biosynthesis; GMP from XMP (L-Gln route): step 1/1. In terms of biological role, catalyzes the synthesis of GMP from XMP. The protein is GMP synthase [glutamine-hydrolyzing] subunit A of Sulfolobus acidocaldarius (strain ATCC 33909 / DSM 639 / JCM 8929 / NBRC 15157 / NCIMB 11770).